A 280-amino-acid polypeptide reads, in one-letter code: MSGSMYDDQYYATSRRHSLVTPPPSVAPRQNRMRSQSVRVSNGTVSTDNSMSSGRVSEATNITQPPAYSKKFVVVGDGGCGKTCLLISYSQGYFPEKYVPTVFENYITQTLHRRSGKTVELALWDTAGQEEYDRLRPLSYPETDLLFVCFAIDCPASLENVMDKWYPEVLHFCPTTPIILVGLKSDLRNKRTCIELLKTQGLTPVTPEQGQAVAGRMNASYVECSSKEMRGVDSVFQLAVDTVVSLEEQNWDTRLPSSSGKPGGKPIGGKKIKKRSCKIL.

Residues 13-59 form a disordered region; that stretch reads TSRRHSLVTPPPSVAPRQNRMRSQSVRVSNGTVSTDNSMSSGRVSEA. The span at 33–59 shows a compositional bias: polar residues; that stretch reads MRSQSVRVSNGTVSTDNSMSSGRVSEA. 76–83 lines the GTP pocket; it reads GDGGCGKT. Residues 98-106 carry the Effector region motif; that stretch reads YVPTVFENY. GTP-binding positions include 125-129 and 183-186; these read DTAGQ and LKSD. A disordered region spans residues 251–275; sequence WDTRLPSSSGKPGGKPIGGKKIKKR. Cysteine 277 carries the post-translational modification Cysteine methyl ester. Residue cysteine 277 is the site of S-geranylgeranyl cysteine attachment. Residues 278–280 constitute a propeptide, removed in mature form; that stretch reads KIL.

Belongs to the small GTPase superfamily. Rho family.

It is found in the cell membrane. The polypeptide is GTP-binding protein rhoC (rhoC) (Emericella nidulans (strain FGSC A4 / ATCC 38163 / CBS 112.46 / NRRL 194 / M139) (Aspergillus nidulans)).